Consider the following 29-residue polypeptide: Pyridoxal 5'-phosphate synthase subunit PdxS (29 aa).

The protein belongs to the PdxS/SNZ family. As to quaternary structure, in the presence of PdxT, forms a dodecamer of heterodimers.

The enzyme catalyses aldehydo-D-ribose 5-phosphate + D-glyceraldehyde 3-phosphate + L-glutamine = pyridoxal 5'-phosphate + L-glutamate + phosphate + 3 H2O + H(+). Its pathway is cofactor biosynthesis; pyridoxal 5'-phosphate biosynthesis. Functionally, catalyzes the formation of pyridoxal 5'-phosphate from ribose 5-phosphate (RBP), glyceraldehyde 3-phosphate (G3P) and ammonia. The ammonia is provided by the PdxT subunit. Can also use ribulose 5-phosphate and dihydroxyacetone phosphate as substrates, resulting from enzyme-catalyzed isomerization of RBP and G3P, respectively. The protein is Pyridoxal 5'-phosphate synthase subunit PdxS of Clostridium pasteurianum.